Consider the following 360-residue polypeptide: Probable CCR4-associated factor 1 homolog 1 (360 aa).

4 residues coordinate a divalent metal cation: Asp37, Glu39, Asp155, and Asp226.

Belongs to the CAF1 family. Component of the CCR4-NOT complex, at least composed of CRR4 and CAF1 proteins. A divalent metal cation serves as cofactor.

The protein resides in the nucleus. The protein localises to the cytoplasm. It carries out the reaction Exonucleolytic cleavage of poly(A) to 5'-AMP.. Ubiquitous transcription factor required for a diverse set of processes. It is a component of the CCR4 complex involved in the control of gene expression. In Arabidopsis thaliana (Mouse-ear cress), this protein is Probable CCR4-associated factor 1 homolog 1 (CAF1-1).